Consider the following 945-residue polypeptide: Kinesin-like protein CIN8 (945 aa).

The 388-residue stretch at 22–409 folds into the Kinesin motor domain; sequence NITVAVRCRG…LEYAAKAKNI (388 aa). 114–121 lines the ATP pocket; that stretch reads GMTSTGKT. The interval 190–243 is disordered; it reads IFDSSSMNHSSRASSQSNSPREPEVAHNGFSRRRQRPPPVKANRMSATKQQLSE. Low complexity predominate over residues 193–208; that stretch reads SSSMNHSSRASSQSNS. Over residues 234 to 243 the composition is skewed to polar residues; it reads MSATKQQLSE. Coiled-coil stretches lie at residues 450–562 and 634–675; these read MSHE…DIKE and LKEF…YLDQ.

Belongs to the TRAFAC class myosin-kinesin ATPase superfamily. Kinesin family. BimC subfamily.

It localises to the cytoplasm. The protein localises to the cytoskeleton. The protein resides in the spindle. Its function is as follows. Elongates the mitotic spindle by interacting with spindle microtubules to generate an outward force pushing spindle poles apart. Following spindle assembly, CIN8 and KIP1 apparently act to oppose a force, possibly generated by KAR3, that draws separated poles back together. In Eremothecium gossypii (strain ATCC 10895 / CBS 109.51 / FGSC 9923 / NRRL Y-1056) (Yeast), this protein is Kinesin-like protein CIN8 (CIN8).